Here is a 622-residue protein sequence, read N- to C-terminus: E3 ubiquitin-protein ligase hrd-1 (622 aa).

Residues 1 to 23 (MRVSAGLMIGGSCVATAATVLNA) form the signal peptide. At 24-41 (FVINKQFYPSIVYLSKSN) the chain is on the lumenal side. The helical transmembrane segment at 42 to 62 (ASMAVLYFQGIVLVYLMFQLL) threads the bilayer. Residues 63 to 99 (KSILFGDLRAAEAEHLSERTWHAVLETCLAFTVFRDD) lie on the Cytoplasmic side of the membrane. The chain crosses the membrane as a helical span at residues 100–120 (FSAMFVMQFIGLLFIKCFHWL). The Lumenal portion of the chain corresponds to 121–141 (ADDRVDMMERSPVITLRFHLR). The chain crosses the membrane as a helical span at residues 142–162 (MMTVLAALGFADSYFVSSAYF). Residues 163-170 (STITKGAS) lie on the Cytoplasmic side of the membrane. Residues 171 to 191 (SQIVFGFEYAILLALVLHVTI) form a helical membrane-spanning segment. The Lumenal portion of the chain corresponds to 192-215 (KYLLHMHDLRNPQSWDNKAVYLLY). The chain crosses the membrane as a helical span at residues 216 to 236 (AELLINLIRCVLYGFFAVIML). At 237–622 (RVHTFPLFSV…RFPPPNPEHE (386 aa)) the chain is on the cytoplasmic side. Residues 292 to 333 (CIICREEMTVESSPKRLPCSHVFHAHCLRSWFQRQQTCPTCR) form an RING-type; atypical zinc finger. A compositionally biased stretch (pro residues) spans 436-445 (MPPPPIPQPN). Disordered stretches follow at residues 436 to 463 (MPPPPIPQPNAAPGESSNAEPPGRPNFD) and 514 to 622 (PVPT…PEHE). The span at 526–538 (ATASSVPTSVPSE) shows a compositional bias: low complexity. The span at 562 to 577 (FNDTQSTSTPSTSAGP) shows a compositional bias: polar residues. Low complexity predominate over residues 579 to 596 (PSLTPSTSSVPSTSSVRT).

It belongs to the HRD1 family. As to quaternary structure, homodimer.

It is found in the endoplasmic reticulum membrane. The enzyme catalyses S-ubiquitinyl-[E2 ubiquitin-conjugating enzyme]-L-cysteine + [acceptor protein]-L-lysine = [E2 ubiquitin-conjugating enzyme]-L-cysteine + N(6)-ubiquitinyl-[acceptor protein]-L-lysine.. It functions in the pathway protein modification; protein ubiquitination. In terms of biological role, acts as an E3 ubiquitin-protein ligase which accepts ubiquitin specifically from endoplasmic reticulum-associated ubc-7 E2 ligase and transfers it to substrates, promoting their degradation. Component of the endoplasmic reticulum quality control (ERQC) system, which is also called the ER-associated degradation (ERAD) system, involved in ubiquitin-dependent degradation of misfolded endoplasmic reticulum proteins. Also promotes the degradation of normal but naturally short-lived proteins. Protects cells from ER stress-induced apoptosis. Thought to play a role together with hsp-3 in developmental growth and function of intestinal cells and to play a role together with hsp-4 in gonad formation. The chain is E3 ubiquitin-protein ligase hrd-1 from Caenorhabditis briggsae.